We begin with the raw amino-acid sequence, 37 residues long: Large ribosomal subunit protein bL36 (37 aa).

It belongs to the bacterial ribosomal protein bL36 family.

In Natranaerobius thermophilus (strain ATCC BAA-1301 / DSM 18059 / JW/NM-WN-LF), this protein is Large ribosomal subunit protein bL36.